Here is a 486-residue protein sequence, read N- to C-terminus: UDP-N-acetylmuramate--L-alanine ligase (486 aa).

129–135 lines the ATP pocket; the sequence is GTHGKTT.

This sequence belongs to the MurCDEF family.

The protein localises to the cytoplasm. The enzyme catalyses UDP-N-acetyl-alpha-D-muramate + L-alanine + ATP = UDP-N-acetyl-alpha-D-muramoyl-L-alanine + ADP + phosphate + H(+). It functions in the pathway cell wall biogenesis; peptidoglycan biosynthesis. In terms of biological role, cell wall formation. In Vibrio vulnificus (strain YJ016), this protein is UDP-N-acetylmuramate--L-alanine ligase.